The chain runs to 249 residues: Aquaporin TIP2-1 (249 aa).

Transmembrane regions (helical) follow at residues 20-40 (AYVA…GSAI) and 54-74 (AGLV…VSVA). The short motif at 83–85 (NPA) is the NPA 1 element. The next 3 helical transmembrane spans lie at 102–122 (VFYW…LGFV), 141–161 (GVVF…ATAA), and 168–188 (LGTI…LAAG). The NPA 2 signature appears at 196–198 (NPA). The chain crosses the membrane as a helical span at residues 217 to 237 (WVGPLVGGGLAGLVYGDVFIG).

Belongs to the MIP/aquaporin (TC 1.A.8) family. TIP (TC 1.A.8.10) subfamily.

Its subcellular location is the vacuole membrane. Functionally, aquaporins facilitate the transport of water and small neutral solutes across cell membranes. This is Aquaporin TIP2-1 (TIP2-1) from Zea mays (Maize).